The sequence spans 932 residues: 3-hydroxy-3-methylglutaryl-coenzyme A reductase (932 aa).

6 helical membrane-spanning segments follow: residues 20 to 40, 59 to 79, 92 to 112, 113 to 133, 162 to 182, and 193 to 213; these read VIVC…FTGL, LSSD…YLYL, ILGI…SAVI, HLFG…LLLI, MAIL…VISI, and VFCC…MTFF. Residue Asn-279 is glycosylated (N-linked (GlcNAc...) asparagine). The helical transmembrane segment at 322 to 342 threads the bilayer; sequence ILTAILATVLASHYIFFSDLA. The interval 343-467 is linker; that stretch reads TYPEKRVSIM…APRPMPELLE (125 aa). Basic and acidic residues predominate over residues 357–367; the sequence is VVNPGSDHEDA. Positions 357–442 are disordered; sequence VVNPGSDHED…SGSEDEEEEV (86 aa). Residues 374-403 show a composition bias toward polar residues; sequence GTLSSSPSTSDVRVIESMTSRTQACQTDPV. Over residues 406–421 the composition is skewed to low complexity; the sequence is SPRNSRSSSPVSSHSV. The segment at 468-932 is catalytic; that stretch reads ILNVGKGPNA…APGTCTANAS (465 aa). Active-site charge relay system residues include Glu-575, Lys-707, and Asp-783. Asn-850 is a glycosylation site (N-linked (GlcNAc...) asparagine). Catalysis depends on His-882, which acts as the Proton donor. An N-linked (GlcNAc...) asparagine glycan is attached at Asn-886. The residue at position 888 (Ser-888) is a Phosphoserine; by AMPK.

The protein belongs to the HMG-CoA reductase family.

It is found in the endoplasmic reticulum membrane. It carries out the reaction (R)-mevalonate + 2 NADP(+) + CoA = (3S)-3-hydroxy-3-methylglutaryl-CoA + 2 NADPH + 2 H(+). The protein operates within metabolic intermediate biosynthesis; (R)-mevalonate biosynthesis; (R)-mevalonate from acetyl-CoA: step 3/3. Its function is as follows. This transmembrane glycoprotein is involved in the control of cholesterol biosynthesis. It is the rate-limiting enzyme of sterol biosynthesis. The protein is 3-hydroxy-3-methylglutaryl-coenzyme A reductase (HMGCR) of Strongylocentrotus purpuratus (Purple sea urchin).